The sequence spans 215 residues: Protein FAM27D1 (215 aa).

Residues Gln74–Arg172 are disordered. The span at Thr87–Arg108 shows a compositional bias: basic and acidic residues. Residues His109 to Thr122 are compositionally biased toward basic residues. Basic and acidic residues-rich tracts occupy residues His123–Thr139 and Ser149–Pro162. Residues Arg163–Arg172 are compositionally biased toward polar residues.

This sequence belongs to the FAM27 family.

The chain is Protein FAM27D1 (FAM27D1) from Homo sapiens (Human).